Here is a 24-residue protein sequence, read N- to C-terminus: Probable caffeoyl-CoA O-methyltransferase (24 aa).

It belongs to the class I-like SAM-binding methyltransferase superfamily. Cation-dependent O-methyltransferase family. CCoAMT subfamily. It depends on a divalent metal cation as a cofactor.

The catalysed reaction is (E)-caffeoyl-CoA + S-adenosyl-L-methionine = (E)-feruloyl-CoA + S-adenosyl-L-homocysteine + H(+). It functions in the pathway aromatic compound metabolism; phenylpropanoid biosynthesis. In terms of biological role, methylates caffeoyl-CoA to feruloyl-CoA and 5-hydroxyferuloyl-CoA to sinapoyl-CoA. Plays a role in the synthesis of feruloylated polysaccharides. Involved in the reinforcement of the plant cell wall. Also involved in the responding to wounding or pathogen challenge by the increased formation of cell wall-bound ferulic acid polymers. The protein is Probable caffeoyl-CoA O-methyltransferase of Pinus pinaster (Maritime pine).